The following is a 277-amino-acid chain: Cation-dependent mannose-6-phosphate receptor (277 aa).

The first 26 residues, 1-26 (MFPFYSCWRTGLLLLLLAVAVRESWQ), serve as a signal peptide directing secretion. The Lumenal portion of the chain corresponds to 27–185 (TEEKTCDLVG…SLACSPEISH (159 aa)). Residues 30–181 (KTCDLVGEKG…EMDSSLACSP (152 aa)) form the MRH domain. Cys32 and Cys78 are joined by a disulfide. 5 N-linked (GlcNAc...) asparagine glycosylation sites follow: Asn57, Asn83, Asn94, Asn107, and Asn113. 2 disulfide bridges follow: Cys132/Cys167 and Cys145/Cys179. A helical transmembrane segment spans residues 186–210 (LSVGSILLVTFASLVAVYVVGGFLY). Residues 211 to 277 (QRLVVGAKGM…EERDDHLLPM (67 aa)) are Cytoplasmic-facing. Residues 256-277 (RGVGDDQLGEESEERDDHLLPM) are disordered. Position 267 is a phosphoserine (Ser267).

In terms of assembly, homodimer. Binds GGA1, GGA2 and GGA3.

It localises to the lysosome membrane. Its function is as follows. Transport of phosphorylated lysosomal enzymes from the Golgi complex and the cell surface to lysosomes. Lysosomal enzymes bearing phosphomannosyl residues bind specifically to mannose-6-phosphate receptors in the Golgi apparatus and the resulting receptor-ligand complex is transported to an acidic prelyosomal compartment where the low pH mediates the dissociation of the complex. This Homo sapiens (Human) protein is Cation-dependent mannose-6-phosphate receptor (M6PR).